Here is a 384-residue protein sequence, read N- to C-terminus: Spermidine/putrescine import ATP-binding protein PotA (384 aa).

Residues 6 to 238 (IAFQNVSKVF…PINHFVATFI (233 aa)) enclose the ABC transporter domain. 40-47 (GASGSGKS) lines the ATP pocket.

This sequence belongs to the ABC transporter superfamily. Spermidine/putrescine importer (TC 3.A.1.11.1) family. As to quaternary structure, the complex is composed of two ATP-binding proteins (PotA), two transmembrane proteins (PotB and PotC) and a solute-binding protein (PotD).

The protein resides in the cell membrane. It catalyses the reaction ATP + H2O + polyamine-[polyamine-binding protein]Side 1 = ADP + phosphate + polyamineSide 2 + [polyamine-binding protein]Side 1.. Part of the ABC transporter complex PotABCD involved in spermidine/putrescine import. Responsible for energy coupling to the transport system. The sequence is that of Spermidine/putrescine import ATP-binding protein PotA from Streptococcus thermophilus (strain ATCC BAA-491 / LMD-9).